A 304-amino-acid chain; its full sequence is 4-diphosphocytidyl-2-C-methyl-D-erythritol kinase (304 aa).

Lysine 23 is an active-site residue. Proline 111–serine 121 provides a ligand contact to ATP. Aspartate 153 is a catalytic residue.

Belongs to the GHMP kinase family. IspE subfamily. As to quaternary structure, homodimer.

It catalyses the reaction 4-CDP-2-C-methyl-D-erythritol + ATP = 4-CDP-2-C-methyl-D-erythritol 2-phosphate + ADP + H(+). It functions in the pathway isoprenoid biosynthesis; isopentenyl diphosphate biosynthesis via DXP pathway; isopentenyl diphosphate from 1-deoxy-D-xylulose 5-phosphate: step 3/6. Catalyzes the phosphorylation of the position 2 hydroxy group of 4-diphosphocytidyl-2C-methyl-D-erythritol. The protein is 4-diphosphocytidyl-2-C-methyl-D-erythritol kinase of Wigglesworthia glossinidia brevipalpis.